Consider the following 216-residue polypeptide: Urease accessory protein UreG (216 aa).

A GTP-binding site is contributed by 24–31; the sequence is GPVGSGKT.

The protein belongs to the SIMIBI class G3E GTPase family. UreG subfamily. In terms of assembly, homodimer. UreD, UreF and UreG form a complex that acts as a GTP-hydrolysis-dependent molecular chaperone, activating the urease apoprotein by helping to assemble the nickel containing metallocenter of UreC. The UreE protein probably delivers the nickel.

Its subcellular location is the cytoplasm. In terms of biological role, facilitates the functional incorporation of the urease nickel metallocenter. This process requires GTP hydrolysis, probably effectuated by UreG. The polypeptide is Urease accessory protein UreG (Variovorax paradoxus (strain S110)).